The following is a 151-amino-acid chain: Ribosome-binding factor A (151 aa).

The segment at 116–151 (DAEVARAAANARPAGDPDPYREPRPADDDDEDDEDE) is disordered. Over residues 120 to 129 (ARAAANARPA) the composition is skewed to low complexity. Residues 142–151 (DDDDEDDEDE) show a composition bias toward acidic residues.

It belongs to the RbfA family. In terms of assembly, monomer. Binds 30S ribosomal subunits, but not 50S ribosomal subunits or 70S ribosomes.

The protein resides in the cytoplasm. Its function is as follows. One of several proteins that assist in the late maturation steps of the functional core of the 30S ribosomal subunit. Associates with free 30S ribosomal subunits (but not with 30S subunits that are part of 70S ribosomes or polysomes). Required for efficient processing of 16S rRNA. May interact with the 5'-terminal helix region of 16S rRNA. The chain is Ribosome-binding factor A from Thermobifida fusca (strain YX).